We begin with the raw amino-acid sequence, 376 residues long: MRLTIAGDSHGKYMIAVLEGIPAGLKIDEEIIRRELFRRRNCYGRGKRMSMEEDAFEIVSGVWGGITTGAPVTILVPNKAGNPVKDVRSVPRPGHIDYAAFVKYKLPDLNVYVERSSARWTVALTAAGALLKSLLREFNIDVLGFVTRLGNVEAKNIPDNFEELRRKRDESAVFCPDPEATEGMISEIDRAKEEGNTLGGKVKVIARGVPAGIGSYSDLFKKLDSKIGSLFFAIPAVKGVVIGSEEMWYGFDYLDEFELEDGRIKRRTNNLGGIEGGITNGEDVWVNVFVKPIPTTGKPLNSVDLRTMEPAKTPYVRSDVTAVPPASVVCEAALAVVISDALLEHLGDGNIDDLKRRFGNENLPRWDDGFWKEYDR.

The NADP(+) site is built by R39 and R45. Residues 115–117, G276, 291–295, and R317 contribute to the FMN site; these read RSS and KPIPT.

Belongs to the chorismate synthase family. Homotetramer. FMNH2 serves as cofactor.

It carries out the reaction 5-O-(1-carboxyvinyl)-3-phosphoshikimate = chorismate + phosphate. The protein operates within metabolic intermediate biosynthesis; chorismate biosynthesis; chorismate from D-erythrose 4-phosphate and phosphoenolpyruvate: step 7/7. Its function is as follows. Catalyzes the anti-1,4-elimination of the C-3 phosphate and the C-6 proR hydrogen from 5-enolpyruvylshikimate-3-phosphate (EPSP) to yield chorismate, which is the branch point compound that serves as the starting substrate for the three terminal pathways of aromatic amino acid biosynthesis. This reaction introduces a second double bond into the aromatic ring system. In Thermotoga sp. (strain RQ2), this protein is Chorismate synthase.